Consider the following 842-residue polypeptide: Type VI secretion system spike protein VgrG2a (842 aa).

A disordered region spans residues 265 to 291 (RSGAGRPFSESRLRGHRRDARVASVSG).

The protein belongs to the VgrG protein family.

Part of the H2 type VI secretion system (H2-T6SS) specialized secretion system, which delivers several virulence factors in both prokaryotic and eukaryotic cells during infection. May form the spike at the tip of the elongating tube formed by haemolysin co-regulated protein 2a/Hcp2a. In turn, may allow the delivery of the Tle4 antibacterial toxin to target cells where it exerts its toxicity. Also promotes the release of VgrG2b toxin to the host cell. This chain is Type VI secretion system spike protein VgrG2a, found in Pseudomonas aeruginosa (strain ATCC 15692 / DSM 22644 / CIP 104116 / JCM 14847 / LMG 12228 / 1C / PRS 101 / PAO1).